Reading from the N-terminus, the 629-residue chain is tRNA uridine 5-carboxymethylaminomethyl modification enzyme MnmG (629 aa).

Residues 13 to 18 (GGGHAG), Val125, and Ser180 contribute to the FAD site. An NAD(+)-binding site is contributed by 273–287 (GPRYCPSIEDKIHRF). Position 370 (Gln370) interacts with FAD.

It belongs to the MnmG family. As to quaternary structure, homodimer. Heterotetramer of two MnmE and two MnmG subunits. FAD is required as a cofactor.

The protein localises to the cytoplasm. Its function is as follows. NAD-binding protein involved in the addition of a carboxymethylaminomethyl (cmnm) group at the wobble position (U34) of certain tRNAs, forming tRNA-cmnm(5)s(2)U34. The polypeptide is tRNA uridine 5-carboxymethylaminomethyl modification enzyme MnmG (Shewanella sp. (strain ANA-3)).